Consider the following 485-residue polypeptide: UDP-N-acetylmuramate--L-alanine ligase (485 aa).

120 to 126 (GSHGKTT) contributes to the ATP binding site.

Belongs to the MurCDEF family.

It localises to the cytoplasm. The enzyme catalyses UDP-N-acetyl-alpha-D-muramate + L-alanine + ATP = UDP-N-acetyl-alpha-D-muramoyl-L-alanine + ADP + phosphate + H(+). Its pathway is cell wall biogenesis; peptidoglycan biosynthesis. Its function is as follows. Cell wall formation. This is UDP-N-acetylmuramate--L-alanine ligase from Rickettsia massiliae (strain Mtu5).